We begin with the raw amino-acid sequence, 329 residues long: L-carnitine dehydrogenase (329 aa).

Position 19–24 (19–24 (GAGVIG)) interacts with NAD(+).

Belongs to the 3-hydroxyacyl-CoA dehydrogenase family. L-carnitine dehydrogenase subfamily. Homodimer.

It localises to the cytoplasm. It carries out the reaction carnitine + NAD(+) = 3-dehydrocarnitine + NADH + H(+). The protein operates within amine and polyamine metabolism; carnitine metabolism. Its function is as follows. Catalyzes the NAD(+)-dependent oxidation of L-carnitine to 3-dehydrocarnitine. The protein is L-carnitine dehydrogenase of Nocardiopsis dassonvillei (strain ATCC 23218 / DSM 43111 / CIP 107115 / JCM 7437 / KCTC 9190 / NBRC 14626 / NCTC 10488 / NRRL B-5397 / IMRU 509) (Actinomadura dassonvillei).